The primary structure comprises 500 residues: ATP synthase subunit alpha (500 aa).

An ATP-binding site is contributed by 169–176 (GDRQTGKT).

The protein belongs to the ATPase alpha/beta chains family. F-type ATPases have 2 components, CF(1) - the catalytic core - and CF(0) - the membrane proton channel. CF(1) has five subunits: alpha(3), beta(3), gamma(1), delta(1), epsilon(1). CF(0) has three main subunits: a(1), b(2) and c(9-12). The alpha and beta chains form an alternating ring which encloses part of the gamma chain. CF(1) is attached to CF(0) by a central stalk formed by the gamma and epsilon chains, while a peripheral stalk is formed by the delta and b chains.

Its subcellular location is the cell membrane. The catalysed reaction is ATP + H2O + 4 H(+)(in) = ADP + phosphate + 5 H(+)(out). Functionally, produces ATP from ADP in the presence of a proton gradient across the membrane. The alpha chain is a regulatory subunit. In Lactococcus lactis subsp. lactis (strain IL1403) (Streptococcus lactis), this protein is ATP synthase subunit alpha.